The primary structure comprises 205 residues: Inactive ribonuclease-like protein 9 (205 aa).

A signal peptide spans 1–24 (MMLITTHSLLLLLLLLQLLQPLQF). Cystine bridges form between Cys-97/Cys-152, Cys-115/Cys-167, and Cys-122/Cys-129. Asn-130 and Asn-142 each carry an N-linked (GlcNAc...) asparagine glycan.

It belongs to the pancreatic ribonuclease family.

The protein resides in the secreted. In terms of biological role, does not exhibit any ribonuclease activity. The polypeptide is Inactive ribonuclease-like protein 9 (RNASE9) (Cebus capucinus (White-faced sapajou)).